A 290-amino-acid chain; its full sequence is Picrinine-N-methytransferase TMT4 (290 aa).

Positions 71 to 80 are SAM motif I; the sequence is MLDVGCGIGG. A Vacuolar targeting signal motif is present at residues 133–139; that stretch reads DGTFDVV. The segment at 134–142 is SAM motif II; that stretch reads GTFDVVFTI. Residues 161–170 are SAM motif III; sequence VAAPGAAIVI.

The protein belongs to the class I-like SAM-binding methyltransferase superfamily. gTMT family. As to quaternary structure, homodimer.

The protein resides in the vacuole membrane. It carries out the reaction picrinine + S-adenosyl-L-methionine = ervincine + S-adenosyl-L-homocysteine + H(+). Its pathway is alkaloid biosynthesis; vindoline biosynthesis. In terms of biological role, S-adenosyl-L-methionine-dependent N-methyltransferase involved in the biosynthesis of biologically active monoterpenoid indole alkaloids (MIAs) natural products including vindoline. Catalyzes the conversion of picrinine to N-methylpicrinine (ervincine). The polypeptide is Picrinine-N-methytransferase TMT4 (Catharanthus roseus (Madagascar periwinkle)).